The chain runs to 463 residues: Succinate--CoA ligase [ADP-forming] subunit beta, mitochondrial (463 aa).

The transit peptide at 1 to 53 (MAASMFYGRQLAAAALRSHRPQTTLRAAAQVLGNSGLFNKHGLQVQQQQQRTL) directs the protein to the mitochondrion. Residues 61 to 288 (MELLQEAGVS…SNSAYRQKKI (228 aa)) form the ATP-grasp domain. The residue at position 78 (lysine 78) is an N6-acetyllysine. At tyrosine 84 the chain carries Phosphotyrosine. The residue at position 88 (lysine 88) is an N6-acetyllysine; alternate. Lysine 88 carries the post-translational modification N6-succinyllysine; alternate. ATP contacts are provided by residues lysine 98 and 105–107 (GRG). 4 positions are modified to N6-acetyllysine: lysine 129, lysine 139, lysine 143, and lysine 216. Positions 258 and 272 each coordinate Mg(2+). Serine 279 carries the phosphoserine modification. Asparagine 323 lines the substrate pocket. Position 341 is a phosphothreonine (threonine 341). N6-acetyllysine is present on lysine 368. 380-382 (GIM) serves as a coordination point for substrate. The residue at position 438 (lysine 438) is an N6-acetyllysine.

This sequence belongs to the succinate/malate CoA ligase beta subunit family. ATP-specific subunit beta subfamily. As to quaternary structure, heterodimer of an alpha and a beta subunit. The beta subunit determines specificity for ATP. Interacts with ALAS2. Mg(2+) is required as a cofactor.

Its subcellular location is the mitochondrion. The enzyme catalyses succinate + ATP + CoA = succinyl-CoA + ADP + phosphate. It functions in the pathway carbohydrate metabolism; tricarboxylic acid cycle; succinate from succinyl-CoA (ligase route): step 1/1. In terms of biological role, ATP-specific succinyl-CoA synthetase functions in the citric acid cycle (TCA), coupling the hydrolysis of succinyl-CoA to the synthesis of ATP and thus represents the only step of substrate-level phosphorylation in the TCA. The beta subunit provides nucleotide specificity of the enzyme and binds the substrate succinate, while the binding sites for coenzyme A and phosphate are found in the alpha subunit. In Mus musculus (Mouse), this protein is Succinate--CoA ligase [ADP-forming] subunit beta, mitochondrial.